A 493-amino-acid chain; its full sequence is Tripartite motif-containing protein 5 (493 aa).

An N-acetylalanine modification is found at alanine 2. The segment at 15 to 59 adopts an RING-type zinc-finger fold; that stretch reads CPICLELLTQPLSLDCGHSFCQACLTANHEKSMLDKGESSCPVCR. Position 86 is a phosphoserine (serine 86). A B box-type zinc finger spans residues 90-132; that stretch reads QKVDHCARHGEKLLLFCQEDGKVICWLCERSQEHRGHHTFLTE. Zn(2+) contacts are provided by cysteine 95, histidine 98, cysteine 117, and histidine 123. The stretch at 131–240 forms a coiled coil; the sequence is TEEVAQECQV…LISDLEHRLQ (110 aa). The tract at residues 185 to 198 is required for interaction with GABARAP and for autophagy; it reads FEQLRDILDWEESN. The B30.2/SPRY domain occupies 281–493; that stretch reads LKGMLEVFRE…VPMTLCSPSS (213 aa).

It belongs to the TRIM/RBCC family. In terms of assembly, can form homodimers and homotrimers. In addition to lower-order dimerization, also exhibits a higher-order multimerization and both low- and high-order multimerizations are essential for its restriction activity. Interacts with BTBD1 and BTBD2. Interacts with PSMC4, PSMC5, PSMD7 and HSPA8/HSC70. Interacts (via B30.2/SPRY domain) with HSPA1A/B. Interacts with PSMC2, MAP3K7/TAK1, TAB2 and TAB3. Interacts with SQSTM1. Interacts with TRIM6 and TRIM34. Interacts with ULK1 (phosphorylated form), GABARAP, GABARAPL1, GABARAPL2, MAP1LC3A, MAP1LC3C and BECN1. Post-translationally, degraded in a proteasome-independent fashion in the absence of viral infection but in a proteasome-dependent fashion following exposure to restriction sensitive virus. Autoubiquitinated in a RING finger- and UBE2D2-dependent manner. Monoubiquitinated by TRIM21. Deubiquitinated by Yersinia YopJ. Ubiquitination may not lead to proteasomal degradation.

It localises to the cytoplasm. Its subcellular location is the nucleus. The enzyme catalyses S-ubiquitinyl-[E2 ubiquitin-conjugating enzyme]-L-cysteine + [acceptor protein]-L-lysine = [E2 ubiquitin-conjugating enzyme]-L-cysteine + N(6)-ubiquitinyl-[acceptor protein]-L-lysine.. It participates in protein modification; protein ubiquitination. Functionally, capsid-specific restriction factor that prevents infection from non-host-adapted retroviruses. Blocks viral replication early in the life cycle, after viral entry but before reverse transcription. In addition to acting as a capsid-specific restriction factor, also acts as a pattern recognition receptor that activates innate immune signaling in response to the retroviral capsid lattice. Binding to the viral capsid triggers its E3 ubiquitin ligase activity, and in concert with the heterodimeric ubiquitin conjugating enzyme complex UBE2V1-UBE2N (also known as UBC13-UEV1A complex) generates 'Lys-63'-linked polyubiquitin chains, which in turn are catalysts in the autophosphorylation of the MAP3K7/TAK1 complex (includes TAK1, TAB2, and TAB3). Activation of the MAP3K7/TAK1 complex by autophosphorylation results in the induction and expression of NF-kappa-B and MAPK-responsive inflammatory genes, thereby leading to an innate immune response in the infected cell. Plays a role in regulating autophagy through activation of autophagy regulator BECN1 by causing its dissociation from its inhibitors BCL2 and TAB2. This chain is Tripartite motif-containing protein 5 (TRIM5), found in Gorilla gorilla gorilla (Western lowland gorilla).